The chain runs to 257 residues: Phosphate import ATP-binding protein PstB (257 aa).

The region spanning 11–252 (FNISRLYLYI…PKNELTEKYV (242 aa)) is the ABC transporter domain. 43-50 (GPSGSGKS) contacts ATP.

The protein belongs to the ABC transporter superfamily. Phosphate importer (TC 3.A.1.7) family. As to quaternary structure, the complex is composed of two ATP-binding proteins (PstB), two transmembrane proteins (PstC and PstA) and a solute-binding protein (PstS).

Its subcellular location is the cell membrane. It carries out the reaction phosphate(out) + ATP + H2O = ADP + 2 phosphate(in) + H(+). Part of the ABC transporter complex PstSACB involved in phosphate import. Responsible for energy coupling to the transport system. The protein is Phosphate import ATP-binding protein PstB of Saccharolobus solfataricus (strain ATCC 35092 / DSM 1617 / JCM 11322 / P2) (Sulfolobus solfataricus).